Reading from the N-terminus, the 130-residue chain is Anti-adapter protein IraD (130 aa).

It belongs to the GpW/Gp25 family. IraD subfamily. As to quaternary structure, interacts with RssB.

The protein localises to the cytoplasm. In terms of biological role, inhibits RpoS proteolysis by regulating RssB activity, thereby increasing the stability of the sigma stress factor RpoS during oxidative stress. Its effect on RpoS stability is due to its interaction with RssB, which probably blocks the interaction of RssB with RpoS, and the consequent delivery of the RssB-RpoS complex to the ClpXP protein degradation pathway. The polypeptide is Anti-adapter protein IraD (Shigella boydii serotype 4 (strain Sb227)).